The chain runs to 64 residues: Conotoxin VnMLCL-05 (64 aa).

The signal sequence occupies residues 1–19 (MLCLPVFIILLLLASPAAP). A propeptide spanning residues 20-43 (NPLQTRIQSNLIRAGPEDANIKTD) is cleaved from the precursor. Lys63 is modified (lysine amide).

The protein belongs to the conotoxin T superfamily. In terms of tissue distribution, expressed by the venom duct.

The protein resides in the secreted. The chain is Conotoxin VnMLCL-05 from Conus ventricosus (Mediterranean cone).